The chain runs to 139 residues: Prostate-associated microseminoprotein (139 aa).

Residues 1 to 35 (MALRMLWAGQAKGILGGWRTICLVVSLFLQHPGVS) form the signal peptide. 5 disulfides stabilise this stretch: cysteine 38/cysteine 78, cysteine 46/cysteine 69, cysteine 64/cysteine 100, cysteine 67/cysteine 77, and cysteine 91/cysteine 114. A disordered region spans residues 116–139 (GGGPDLEWGSANTPAPGASAPHSS).

The protein belongs to the beta-microseminoprotein family.

It localises to the secreted. Its function is as follows. Acts as a ligand for C-C chemokine receptor CCR2. Signals through binding and activation of CCR2 and induces a strong chemotactic response and mobilization of intracellular calcium ions. Exhibits a chemotactic activity for monocytes and lymphocytes but not neutrophils. This is Prostate-associated microseminoprotein (Msmp) from Mus musculus (Mouse).